Consider the following 338-residue polypeptide: ATPase GET3 (338 aa).

33–40 (KGGVGKTT) contacts ATP. Asp-62 is an active-site residue. Residues Glu-242 and Asn-269 each coordinate ATP. Residues Cys-280 and Cys-283 each coordinate Zn(2+).

The protein belongs to the arsA ATPase family. In terms of assembly, homodimer.

The protein localises to the cytoplasm. The protein resides in the endoplasmic reticulum. In terms of biological role, ATPase required for the post-translational delivery of tail-anchored (TA) proteins to the endoplasmic reticulum. Recognizes and selectively binds the transmembrane domain of TA proteins in the cytosol. This complex then targets to the endoplasmic reticulum by membrane-bound receptors, where the tail-anchored protein is released for insertion. This process is regulated by ATP binding and hydrolysis. ATP binding drives the homodimer towards the closed dimer state, facilitating recognition of newly synthesized TA membrane proteins. ATP hydrolysis is required for insertion. Subsequently, the homodimer reverts towards the open dimer state, lowering its affinity for the membrane-bound receptor, and returning it to the cytosol to initiate a new round of targeting. The sequence is that of ATPase GET3 from Uncinocarpus reesii (strain UAMH 1704).